The primary structure comprises 330 residues: DNA primase small subunit PriS (330 aa).

Catalysis depends on residues Asp101 and Asp103. Zn(2+) is bound by residues Cys116, Cys119, Cys128, and Asp131. Residue Asp235 is part of the active site.

The protein belongs to the eukaryotic-type primase small subunit family. In terms of assembly, heterodimer of a small subunit (PriS) and a large subunit (PriL). It depends on Mg(2+) as a cofactor. The cofactor is Mn(2+).

Catalytic subunit of DNA primase, an RNA polymerase that catalyzes the synthesis of short RNA molecules used as primers for DNA polymerase during DNA replication. The small subunit contains the primase catalytic core and has DNA synthesis activity on its own. Binding to the large subunit stabilizes and modulates the activity, increasing the rate of DNA synthesis while decreasing the length of the DNA fragments, and conferring RNA synthesis capability. The DNA polymerase activity may enable DNA primase to also catalyze primer extension after primer synthesis. May also play a role in DNA repair. In Saccharolobus islandicus (strain Y.N.15.51 / Yellowstone #2) (Sulfolobus islandicus), this protein is DNA primase small subunit PriS.